We begin with the raw amino-acid sequence, 86 residues long: Large ribosomal subunit protein bL31B (86 aa).

It belongs to the bacterial ribosomal protein bL31 family. Type B subfamily. Part of the 50S ribosomal subunit.

In Streptococcus uberis (strain ATCC BAA-854 / 0140J), this protein is Large ribosomal subunit protein bL31B.